Here is a 301-residue protein sequence, read N- to C-terminus: NADH-cytochrome b5 reductase 3 (301 aa).

A lipid anchor (N-myristoyl glycine) is attached at Gly2. Residues 40 to 152 (DIKYPLRLID…RGPNGLLVYQ (113 aa)) form the FAD-binding FR-type domain. Lys42 bears the N6-acetyllysine mark. A Phosphotyrosine modification is found at Tyr43. The residue at position 50 (Lys50) is an N6-acetyllysine. Arg92, Pro93, Tyr94, Val109, Lys111, and Phe114 together coordinate FAD. Lys120 is modified (N6-acetyllysine). The FAD site is built by Lys126, Met127, Ser128, and Thr185.

This sequence belongs to the flavoprotein pyridine nucleotide cytochrome reductase family. In terms of assembly, component of a complex composed of cytochrome b5, NADH-cytochrome b5 reductase (CYB5R3) and MTARC2. Interacts with MTLN; the interaction is required to maintain cellular lipid composition and leads to stimulation of mitochondrial respiratory complex I activity. FAD serves as cofactor. In terms of processing, myristoylated. In terms of tissue distribution, ubiquitously expressed. As to expression, expressed only in erythroid tissues, reticulocytes and liver.

Its subcellular location is the endoplasmic reticulum membrane. The protein resides in the mitochondrion outer membrane. It is found in the cytoplasm. The catalysed reaction is 2 Fe(III)-[cytochrome b5] + NADH = 2 Fe(II)-[cytochrome b5] + NAD(+) + H(+). Functionally, catalyzes the reduction of two molecules of cytochrome b5 using NADH as the electron donor. This is NADH-cytochrome b5 reductase 3 from Rattus norvegicus (Rat).